Reading from the N-terminus, the 112-residue chain is DNA-binding protein Bv3F (112 aa).

The interval 65–92 is disordered; it reads KRNSKRMSTVPKYRDPATGKTWSGRGRQ. DNA-binding regions lie at residues 89 to 94 and 89 to 95; these read RGRQPA and RGRQPAW.

This sequence belongs to the histone-like protein H-NS family. As to quaternary structure, homodimer that oligomerizes on DNA into higher-order complexes that form bridges between disparate regions of DNA compacting it.

The protein resides in the cytoplasm. It localises to the nucleoid. Its function is as follows. A DNA-binding protein implicated in transcriptional repression and chromosome organization and compaction. Binds in the minor groove of AT-rich DNA. Binds nucleation sites in AT-rich DNA and bridges them, forming higher-order nucleoprotein complexes and condensing the chromosome. As many horizontally transferred genes are AT-rich, it plays a central role in silencing foreign genes. In Burkholderia vietnamiensis (strain G4 / LMG 22486) (Burkholderia cepacia (strain R1808)), this protein is DNA-binding protein Bv3F.